The sequence spans 132 residues: Agouti-signaling protein (132 aa).

The signal sequence occupies residues 1 to 22; it reads MDVTRLLLATLLVFLCFFTVYS. N-linked (GlcNAc...) asparagine glycosylation is present at Asn-39. A disordered region spans residues 61–87; that stretch reads HISRKEAEKKRSSKKEASMKKVARPRT. Residues 64 to 79 are compositionally biased toward basic and acidic residues; the sequence is RKEAEKKRSSKKEASM. 5 disulfide bridges follow: Cys-93–Cys-108, Cys-100–Cys-114, Cys-107–Cys-125, Cys-111–Cys-132, and Cys-116–Cys-123. One can recognise an Agouti domain in the interval 93–132; that stretch reads CVATRDSCKPPAPACCDPCASCQCRFFRSACSCRVLSLNC.

The protein resides in the secreted. In terms of biological role, involved in the regulation of melanogenesis. The binding of ASP to MC1R precludes alpha-MSH initiated signaling and thus blocks production of cAMP, leading to a down-regulation of eumelanogenesis (brown/black pigment) and thus increasing synthesis of pheomelanin (yellow/red pigment). This is Agouti-signaling protein (ASIP) from Colobus polykomos (Western black-and-white colobus monkey).